Here is a 405-residue protein sequence, read N- to C-terminus: Tyrosine--tRNA ligase (405 aa).

Residue Tyr35 coordinates L-tyrosine. Positions 40-49 (TTSSSLHIGH) match the 'HIGH' region motif. L-tyrosine is bound by residues Tyr166 and Gln170. The 'KMSKS' region motif lies at 226 to 230 (KMGKS). Lys229 lines the ATP pocket. One can recognise an S4 RNA-binding domain in the interval 340–404 (ILLIDLMLDS…VGKKKFLRIV (65 aa)).

This sequence belongs to the class-I aminoacyl-tRNA synthetase family. TyrS type 1 subfamily. In terms of assembly, homodimer.

It is found in the cytoplasm. It carries out the reaction tRNA(Tyr) + L-tyrosine + ATP = L-tyrosyl-tRNA(Tyr) + AMP + diphosphate + H(+). Functionally, catalyzes the attachment of tyrosine to tRNA(Tyr) in a two-step reaction: tyrosine is first activated by ATP to form Tyr-AMP and then transferred to the acceptor end of tRNA(Tyr). The polypeptide is Tyrosine--tRNA ligase (Borrelia garinii subsp. bavariensis (strain ATCC BAA-2496 / DSM 23469 / PBi) (Borreliella bavariensis)).